The chain runs to 194 residues: 3-isopropylmalate dehydratase small subunit (194 aa).

Belongs to the LeuD family. LeuD type 1 subfamily. As to quaternary structure, heterodimer of LeuC and LeuD.

The catalysed reaction is (2R,3S)-3-isopropylmalate = (2S)-2-isopropylmalate. It participates in amino-acid biosynthesis; L-leucine biosynthesis; L-leucine from 3-methyl-2-oxobutanoate: step 2/4. Its function is as follows. Catalyzes the isomerization between 2-isopropylmalate and 3-isopropylmalate, via the formation of 2-isopropylmaleate. This chain is 3-isopropylmalate dehydratase small subunit, found in Halalkalibacterium halodurans (strain ATCC BAA-125 / DSM 18197 / FERM 7344 / JCM 9153 / C-125) (Bacillus halodurans).